A 488-amino-acid polypeptide reads, in one-letter code: Kelch-like protein 15 (488 aa).

The 68-residue stretch at 31–98 (LDVTLVIEDH…MYYGTIELSM (68 aa)) folds into the BTB domain. Residues 133-237 (CAEIMRLLDD…TPSSVFEKVK (105 aa)) enclose the BACK domain. Kelch repeat units lie at residues 328-379 (FVFL…VIGR), 381-426 (VYAV…VLGN), and 428-473 (LYIT…NKCK).

As to quaternary structure, homodimer. Interacts with CUL3.

It localises to the nucleus. It functions in the pathway protein modification; protein ubiquitination. Substrate-specific adapter for CUL3 E3 ubiquitin-protein ligase complex. The polypeptide is Kelch-like protein 15 (KLHL15) (Gallus gallus (Chicken)).